The following is a 1537-amino-acid chain: DNA excision repair protein ERCC-6-like 2 (1537 aa).

The region spanning 134–319 (YRHYIEGRGC…WCVMDWAVPG (186 aa)) is the Helicase ATP-binding domain. 147-154 (DDMGLGKT) is an ATP binding site. A DEAH box motif is present at residues 270–273 (DEAH). One can recognise a Helicase C-terminal domain in the interval 510–660 (VLQQLLNHFR…CVVVGSENAK (151 aa)). 2 disordered regions span residues 715–735 (KGEP…QEPT) and 749–768 (SVGH…TSRT). The span at 755-764 (GKTDKHKFSD) shows a compositional bias: basic and acidic residues. Residues 772–783 (PAQLTLLQCGFS) carry the Atypical PIP-box motif. Disordered regions lie at residues 791–811 (KSDQ…DEQP), 833–891 (SEHQ…EDSD), and 918–948 (EDSE…PNLL). Over residues 834–857 (EHQKSDNIQTPDEKCVSDKSEKTL) the composition is skewed to basic and acidic residues. S968 and S971 each carry phosphoserine. A disordered region spans residues 1274-1306 (VHKKEERVRNKSKEKESLLKENPSNDSTLSCYD). Positions 1276-1292 (KKEERVRNKSKEKESLL) are enriched in basic and acidic residues. Over residues 1295–1306 (NPSNDSTLSCYD) the composition is skewed to polar residues.

The protein belongs to the SNF2/RAD54 helicase family. Interacts with NEK6. Interacts (via an atypical PIP-box) with PCNA; this interaction facilitates cenrtomeric localization of ERCC6L2. Interacts with CYREN; this interaction is DNA independent. Interacts with XRCC6 and XRCC5. Post-translationally, phosphorylated by NEK6.

It is found in the nucleus. It localises to the cytoplasm. Its subcellular location is the cytoskeleton. The protein resides in the microtubule organizing center. The protein localises to the centrosome. It is found in the mitochondrion. It localises to the chromosome. Its subcellular location is the centromere. Functionally, promotes double-strand break (DSB) end-joining and facilitates programmed recombination by controlling how DNA ends are joined in a spatially oriented manner during repair. Also plays a role in DNA repair by restricting DNA end resection in double strand break (DSB) repair. Facilitates replication of complex DNA regions and regulates the maintenance of chromatin structure. The protein is DNA excision repair protein ERCC-6-like 2 of Mus musculus (Mouse).